A 117-amino-acid polypeptide reads, in one-letter code: Large ribosomal subunit protein bL19 (117 aa).

The protein belongs to the bacterial ribosomal protein bL19 family.

This protein is located at the 30S-50S ribosomal subunit interface and may play a role in the structure and function of the aminoacyl-tRNA binding site. The sequence is that of Large ribosomal subunit protein bL19 from Alkalilimnicola ehrlichii (strain ATCC BAA-1101 / DSM 17681 / MLHE-1).